Consider the following 492-residue polypeptide: Probable beta-1,4-xylosyltransferase IRX14H (492 aa).

Topologically, residues 1-33 (MKLSVFRLSYWNRRGSSFRSSPSLDPSFDGKSP) are cytoplasmic. A helical; Signal-anchor for type II membrane protein membrane pass occupies residues 34–54 (SSVFWFVIHGLCCLISLILGF). Residues 55–492 (RFSHLVLFFL…FDGVKVSATS (438 aa)) are Lumenal-facing. 3 N-linked (GlcNAc...) asparagine glycosylation sites follow: N99, N196, and N314. Positions 457 to 492 (IKEAKSNSKPRVSKSKSYKEKQEPKAFDGVKVSATS) are disordered. A compositionally biased stretch (basic and acidic residues) spans 473–484 (SYKEKQEPKAFD).

This sequence belongs to the glycosyltransferase 43 family. As to expression, expressed in developing interfascicular fibers and xylem cells in stems and developing secondary xylem in roots.

The protein localises to the golgi apparatus membrane. Its function is as follows. Involved in the synthesis of the hemicellulose glucuronoxylan, a major component of secondary cell walls. Probably involved in the elongation of glucuronoxylan xylosyl backbone. The protein is Probable beta-1,4-xylosyltransferase IRX14H (IRX14H) of Arabidopsis thaliana (Mouse-ear cress).